Here is a 162-residue protein sequence, read N- to C-terminus: N5-carboxyaminoimidazole ribonucleotide mutase (162 aa).

Positions 11, 14, and 41 each coordinate substrate.

This sequence belongs to the AIR carboxylase family. Class I subfamily.

It carries out the reaction 5-carboxyamino-1-(5-phospho-D-ribosyl)imidazole + H(+) = 5-amino-1-(5-phospho-D-ribosyl)imidazole-4-carboxylate. The protein operates within purine metabolism; IMP biosynthesis via de novo pathway; 5-amino-1-(5-phospho-D-ribosyl)imidazole-4-carboxylate from 5-amino-1-(5-phospho-D-ribosyl)imidazole (N5-CAIR route): step 2/2. Its function is as follows. Catalyzes the conversion of N5-carboxyaminoimidazole ribonucleotide (N5-CAIR) to 4-carboxy-5-aminoimidazole ribonucleotide (CAIR). This is N5-carboxyaminoimidazole ribonucleotide mutase from Bacillus subtilis (strain 168).